The following is a 291-amino-acid chain: MGKLRQIAFYGKGGIGKSTTSQNTLAALVEMGQKILIVGCDPKADSTRLILNTKLQDTVLHLAAEAGSVEDLELEDVVKIGYKGIKCTEAGGPEPGVGCAGRGVITAINFLEENGAYDDVDYVSYDVLGDVVCGGFAMPIRENKAQEIYIVMSGEMMALYAANNIAKGILKYANSGGVRLGGLICNERKTDRELELAEALAARLGCKMIHFVPRDNIVQHAELRRETVIQYAPESKQAQEYRELARKIHENSGKGVIPTPITMEELEEMLMDFGIMQSEEDRLAAIAAAEA.

An ATP-binding site is contributed by 11 to 18 (GKGGIGKS). Position 99 (C99) interacts with [4Fe-4S] cluster. ADP-ribosylarginine; by dinitrogenase reductase ADP-ribosyltransferase is present on R102. Residue C133 coordinates [4Fe-4S] cluster.

The protein belongs to the NifH/BchL/ChlL family. In terms of assembly, homodimer. It depends on [4Fe-4S] cluster as a cofactor. In terms of processing, the reversible ADP-ribosylation of Arg-102 inactivates the nitrogenase reductase and regulates nitrogenase activity.

It catalyses the reaction N2 + 8 reduced [2Fe-2S]-[ferredoxin] + 16 ATP + 16 H2O = H2 + 8 oxidized [2Fe-2S]-[ferredoxin] + 2 NH4(+) + 16 ADP + 16 phosphate + 6 H(+). In terms of biological role, the key enzymatic reactions in nitrogen fixation are catalyzed by the nitrogenase complex, which has 2 components: the iron protein and the molybdenum-iron protein. In Cereibacter sphaeroides (strain ATCC 17023 / DSM 158 / JCM 6121 / CCUG 31486 / LMG 2827 / NBRC 12203 / NCIMB 8253 / ATH 2.4.1.) (Rhodobacter sphaeroides), this protein is Nitrogenase iron protein.